Reading from the N-terminus, the 28-residue chain is Venom protein (28 aa).

A disordered region spans residues lysine 1 to alanine 28. A compositionally biased stretch (polar residues) spans aspartate 19–alanine 28.

Expressed by the venom gland.

The protein localises to the secreted. Functionally, causes symptoms of mild intoxication and transient paralysis in insects (A.domestica). This chain is Venom protein, found in Rhopalurus junceus (Caribbean blue scorpion).